Here is a 359-residue protein sequence, read N- to C-terminus: Peptide chain release factor 1 (359 aa).

At glutamine 236 the chain carries N5-methylglutamine.

This sequence belongs to the prokaryotic/mitochondrial release factor family. Methylated by PrmC. Methylation increases the termination efficiency of RF1.

The protein localises to the cytoplasm. In terms of biological role, peptide chain release factor 1 directs the termination of translation in response to the peptide chain termination codons UAG and UAA. The protein is Peptide chain release factor 1 of Streptococcus pneumoniae serotype 4 (strain ATCC BAA-334 / TIGR4).